The chain runs to 432 residues: Trigger factor (432 aa).

The PPIase FKBP-type domain maps to 161-246 (EDRVTIDFTG…LKKVEERELP (86 aa)).

It belongs to the FKBP-type PPIase family. Tig subfamily. Homodimer and monomer. In vivo most of the ribosomes are in complex with monomeric TF. Uncomplexed TF, however, is in a monomer-dimer equilibrium with approximately two thirds of TF existing in a dimeric state.

Its subcellular location is the cytoplasm. It catalyses the reaction [protein]-peptidylproline (omega=180) = [protein]-peptidylproline (omega=0). In terms of biological role, involved in protein export. Acts as a chaperone by maintaining the newly synthesized protein in an open conformation. Functions as a peptidyl-prolyl cis-trans isomerase. The chain is Trigger factor from Escherichia fergusonii (strain ATCC 35469 / DSM 13698 / CCUG 18766 / IAM 14443 / JCM 21226 / LMG 7866 / NBRC 102419 / NCTC 12128 / CDC 0568-73).